Here is an 86-residue protein sequence, read N- to C-terminus: Putative membrane protein insertion efficiency factor (86 aa).

Belongs to the UPF0161 family.

Its subcellular location is the cell inner membrane. Functionally, could be involved in insertion of integral membrane proteins into the membrane. The polypeptide is Putative membrane protein insertion efficiency factor (Pasteurella multocida (strain Pm70)).